Here is a 288-residue protein sequence, read N- to C-terminus: Bifunctional protein FolD (288 aa).

Residues 166-168 (GRS), Ser-191, and Ile-232 contribute to the NADP(+) site.

Belongs to the tetrahydrofolate dehydrogenase/cyclohydrolase family. Homodimer.

The catalysed reaction is (6R)-5,10-methylene-5,6,7,8-tetrahydrofolate + NADP(+) = (6R)-5,10-methenyltetrahydrofolate + NADPH. It carries out the reaction (6R)-5,10-methenyltetrahydrofolate + H2O = (6R)-10-formyltetrahydrofolate + H(+). The protein operates within one-carbon metabolism; tetrahydrofolate interconversion. Functionally, catalyzes the oxidation of 5,10-methylenetetrahydrofolate to 5,10-methenyltetrahydrofolate and then the hydrolysis of 5,10-methenyltetrahydrofolate to 10-formyltetrahydrofolate. This Rickettsia massiliae (strain Mtu5) protein is Bifunctional protein FolD.